The chain runs to 72 residues: ADVSYGINKDCLLPMDVGRCRAKFPRYYYNSSSRRCEKFNYGGCRGNANNFHTLEECEKVCGVRSRDSPKEN.

The N-terminal stretch at 1-6 is a signal peptide; it reads ADVSYG. In terms of domain architecture, BPTI/Kunitz inhibitor spans 11-61; sequence CLLPMDVGRCRAKFPRYYYNSSSRRCEKFNYGGCRGNANNFHTLEECEKVC. 3 disulfide bridges follow: C11-C61, C20-C44, and C36-C57. A propeptide spanning residues 66–72 is cleaved from the precursor; the sequence is RDSPKEN.

Belongs to the venom Kunitz-type family. Sea anemone type 2 potassium channel toxin subfamily.

The protein resides in the secreted. It localises to the nematocyst. Functionally, serine protease inhibitor that inhibits both tissue and plasma kallikreins. Has hemolytic activity. Inhibits voltage-gated potassium channels (Kv). This is U-actitoxin-Avd3r from Anemonia viridis (Snakelocks anemone).